The primary structure comprises 322 residues: Ribosomal RNA small subunit methyltransferase H (322 aa).

Residues 47 to 49, Asp-67, Phe-93, Asp-112, and Gln-119 contribute to the S-adenosyl-L-methionine site; that span reads GGH.

This sequence belongs to the methyltransferase superfamily. RsmH family.

It is found in the cytoplasm. The catalysed reaction is cytidine(1402) in 16S rRNA + S-adenosyl-L-methionine = N(4)-methylcytidine(1402) in 16S rRNA + S-adenosyl-L-homocysteine + H(+). Functionally, specifically methylates the N4 position of cytidine in position 1402 (C1402) of 16S rRNA. In Stenotrophomonas maltophilia (strain R551-3), this protein is Ribosomal RNA small subunit methyltransferase H.